Reading from the N-terminus, the 123-residue chain is Large ribosomal subunit protein uL18 (123 aa).

The protein belongs to the universal ribosomal protein uL18 family. In terms of assembly, part of the 50S ribosomal subunit; part of the 5S rRNA/L5/L18/L25 subcomplex. Contacts the 5S and 23S rRNAs.

Its function is as follows. This is one of the proteins that bind and probably mediate the attachment of the 5S RNA into the large ribosomal subunit, where it forms part of the central protuberance. This Chlamydia caviae (strain ATCC VR-813 / DSM 19441 / 03DC25 / GPIC) (Chlamydophila caviae) protein is Large ribosomal subunit protein uL18.